Consider the following 839-residue polypeptide: Amyloid-beta A4 precursor protein-binding family A member 1 (839 aa).

Disordered stretches follow at residues 1–118 (MNHL…DESA), 235–346 (RLHH…EKRD), and 362–437 (VKTR…ESRK). Residues 23 to 38 (ESVEADLEHPEVEEEQ) are compositionally biased toward acidic residues. At S79 the chain carries Phosphoserine. Composition is skewed to basic and acidic residues over residues 103–112 (DGYEAERAQD) and 237–255 (HHYDERSDGESDSPEKEAE). Residues 227–315 (YRQEALGARL…TPGGGHPDSP (89 aa)) form a munc-18-1 binding region. Residues S243, S247, S249, S264, S281, and S286 each carry the phosphoserine modification. T306 is subject to Phosphothreonine. A phosphoserine mark is found at S314 and S369. A Phosphothreonine modification is found at T372. The interval 375–438 (EPKEPIWVMR…ASTNKESRKS (64 aa)) is LIN-2/CASK binding. Positions 389 to 400 (PTRDCDDQRPVD) are enriched in basic and acidic residues. The span at 401-417 (GDSPSPGSSSPLGAESS) shows a compositional bias: low complexity. S403, S405, S410, and S570 each carry phosphoserine. One can recognise a PID domain in the interval 459–645 (DGIIFAANYL…LLNTQDMYND (187 aa)). The tract at residues 628–643 (LSQKEYSDLLNTQDMY) is autoinhibitory helix linker. PDZ domains lie at 658 to 744 (DVFI…IVRC) and 749 to 824 (TVLI…TMPA).

As to quaternary structure, part of a multimeric complex containing STXBP1 and STX1A. Interacts with STXBP1. Component of the brain-specific heterotrimeric complex (LIN-10-LIN-2-LIN-7 complex) composed of at least APBA1, CASK, and LIN7, which associates with the motor protein KIF17 to transport vesicles along microtubules. Within the complex, interacts (via PDZ domain) with the motor protein KIF17; the interaction is direct and is required for association of KIF17 with the cargo that is to be transported. Binds to the cytoplasmic domain of amyloid protein (APP). Interacts (via PDZ 1 and 2 domains) with FSPB. Isoform 2 interacts (via its truncated PID domain) with active, GTP-bound RAB6A and RAB6B. Brain. Detected in the cerebellum, hippocampus, olfactory system, piriform and entorhinal cortex, supraoptic nucleus of the hypothalamus, substantia nigra, and other mesencephalic areas.

Its subcellular location is the cytoplasm. It localises to the perinuclear region. The protein resides in the nucleus. It is found in the golgi apparatus. Putative function in synaptic vesicle exocytosis by binding to Munc18-1, an essential component of the synaptic vesicle exocytotic machinery. May modulate processing of the amyloid-beta precursor protein (APP) and hence formation of APP-beta. The chain is Amyloid-beta A4 precursor protein-binding family A member 1 (Apba1) from Rattus norvegicus (Rat).